We begin with the raw amino-acid sequence, 362 residues long: 4-hydroxytryptamine kinase (362 aa).

Residues Asn-37, Lys-57, and 118-120 (QDV) each bind ATP. The active site involves Asp-224. 249–251 (DWE) contributes to the ATP binding site.

The protein belongs to the methylthioribose kinase family. In terms of assembly, monomer. The cofactor is Mg(2+).

It carries out the reaction 4-hydroxytryptamine + ATP = norbaeocystin + ADP + H(+). The catalysed reaction is psilocin + ATP = psilocybin + ADP + H(+). It catalyses the reaction 4-hydroxy-N,N,N-trimethyltryptamine + ATP = aeruginascin + ADP + H(+). It functions in the pathway secondary metabolite biosynthesis. 4-hydroxytryptamine kinase; part of the gene cluster that mediates the biosynthesis of psilocybin, a psychotropic tryptamine-derived natural product. The first step in the pathway is the decarboxylation of L-tryptophan to tryptamine by the decarboxylase psiD. 4-hydroxy-L-tryptophan is accepted as substrate by psiD as well. The cytochrome P450 monooxygenase psiH then converts tryptamine to 4-hydroxytryptamine. The kinase psiK catalyzes the 4-O-phosphorylation step by converting 4-hydroxytryptamine into norbaeocystin. The methyltransferase psiM then catalyzes iterative methyl transfer to the amino group of norbaeocystin to yield psilocybin via a monomethylated intermediate, baeocystin. 4-hydroxy-6-methyl-l-tryptophancan also be converted the decarboxylase PsiD, kinase PsiK, and methyltransferase PsiM into respectively 6-methyl-norbaeocystin, 6-methylbaeocystin, and 6-methylpsilocybin. PsiK kinase can also turn psilocin into psilocybin. This activity may represent a protective mechanism to rephosphorylate the unstable psilocin to the stable psilocybin in case of intracellular ester cleavage. Moreover, psiK is able to O-phosphorylate the quaternary amine 4-hydroxy-N,N,N-trimethyltryptamine (4-OH-TMT) to yield aeruginascin, another bioactive compound found in Psilocybe species. This Psilocybe cubensis (Psychedelic mushroom) protein is 4-hydroxytryptamine kinase.